The following is a 185-amino-acid chain: Elongation factor P (185 aa).

This sequence belongs to the elongation factor P family.

It localises to the cytoplasm. Its pathway is protein biosynthesis; polypeptide chain elongation. Its function is as follows. Involved in peptide bond synthesis. Stimulates efficient translation and peptide-bond synthesis on native or reconstituted 70S ribosomes in vitro. Probably functions indirectly by altering the affinity of the ribosome for aminoacyl-tRNA, thus increasing their reactivity as acceptors for peptidyl transferase. This Trichormus variabilis (strain ATCC 29413 / PCC 7937) (Anabaena variabilis) protein is Elongation factor P.